The sequence spans 1363 residues: DNA-directed RNA polymerase subunit beta (1363 aa).

This sequence belongs to the RNA polymerase beta chain family. In terms of assembly, the RNAP catalytic core consists of 2 alpha, 1 beta, 1 beta' and 1 omega subunit. When a sigma factor is associated with the core the holoenzyme is formed, which can initiate transcription.

It carries out the reaction RNA(n) + a ribonucleoside 5'-triphosphate = RNA(n+1) + diphosphate. Functionally, DNA-dependent RNA polymerase catalyzes the transcription of DNA into RNA using the four ribonucleoside triphosphates as substrates. This Pelagibacter ubique (strain HTCC1062) protein is DNA-directed RNA polymerase subunit beta.